Reading from the N-terminus, the 292-residue chain is Probable vesicular-fusion protein sec17 homolog (292 aa).

This sequence belongs to the SNAP family.

It localises to the membrane. Its function is as follows. Required for vesicular transport between the endoplasmic reticulum and the Golgi apparatus. In Neurospora crassa (strain ATCC 24698 / 74-OR23-1A / CBS 708.71 / DSM 1257 / FGSC 987), this protein is Probable vesicular-fusion protein sec17 homolog.